The following is a 551-amino-acid chain: MKNINPNRTQAWKHLKQHFDDMKSTSINDLFNQDKYRFAHFSKTFNNEILVDYSKNLITNETIIKLISLAIECDLIEAISDMFHGEKINCSEDRAVLHIALRNIKNTPILVDGFNVMPQINAVLNKMKQFCNRVIQGNWTGYTDKIITDIVNIGIGGSNLGPYMVTEALKPYRNHLNMHFVSNIDGTHIFETLKNLNPENTLFVIASKTFTTQETMTNALSARNWFCKATSDAQHISKHFIALSTNTIAVRKFGIDPSENMFKFWDWVGGRYSLWSAIGLPIMLSVGVSNFELLLTGAHDMDIHFYSTPLHENLPVILALIGIWYNNFFQVETEAIFPYDQYMHRFTAYLQQVNMESNGKCVDRNGCPITYQTGPIIWGEPGTNGQHSFYQLLHQGTKMVPCDFIAPAISHNPISDHHEKLISNFFAQTKALAFGNTHLTSMQKYIQSKKNYKHEQCIVPFKLCKGNNPSNSILVKKITPYTLGALIALYEHKIFTQGIIFNIYTFDQWGVELGKQLADSILPELKYESMISKNHDSSTYGLIHCYKSWCG.

The active-site Proton donor is the E356. Catalysis depends on residues H387 and K515.

It belongs to the GPI family.

It is found in the cytoplasm. It carries out the reaction alpha-D-glucose 6-phosphate = beta-D-fructose 6-phosphate. Its pathway is carbohydrate biosynthesis; gluconeogenesis. It participates in carbohydrate degradation; glycolysis; D-glyceraldehyde 3-phosphate and glycerone phosphate from D-glucose: step 2/4. Functionally, catalyzes the reversible isomerization of glucose-6-phosphate to fructose-6-phosphate. The polypeptide is Glucose-6-phosphate isomerase (Blochmanniella pennsylvanica (strain BPEN)).